A 190-amino-acid chain; its full sequence is Peptidyl-tRNA hydrolase (190 aa).

Tyr14 contacts tRNA. Catalysis depends on His19, which acts as the Proton acceptor. 3 residues coordinate tRNA: Tyr64, Asn66, and Asn112.

It belongs to the PTH family. Monomer.

The protein localises to the cytoplasm. The enzyme catalyses an N-acyl-L-alpha-aminoacyl-tRNA + H2O = an N-acyl-L-amino acid + a tRNA + H(+). Functionally, hydrolyzes ribosome-free peptidyl-tRNAs (with 1 or more amino acids incorporated), which drop off the ribosome during protein synthesis, or as a result of ribosome stalling. In terms of biological role, catalyzes the release of premature peptidyl moieties from peptidyl-tRNA molecules trapped in stalled 50S ribosomal subunits, and thus maintains levels of free tRNAs and 50S ribosomes. The polypeptide is Peptidyl-tRNA hydrolase (Chlorobium limicola (strain DSM 245 / NBRC 103803 / 6330)).